Here is a 242-residue protein sequence, read N- to C-terminus: Coiled-coil domain-containing protein 107 (242 aa).

A signal peptide spans 1–24 (MEGAGPVLSILGLLLVSAPFGVLG). The interval 27–62 (PSADLGAHPERGSQVSPGTTEPRRQPPPKDQRERAR) is disordered. Over residues 47–62 (EPRRQPPPKDQRERAR) the composition is skewed to basic and acidic residues. Residues 65 to 85 (SLSLGALYTAAVVAFVLFKCL) form a helical membrane-spanning segment. A coiled-coil region spans residues 97–132 (EKNKKKSSQSEQQLVQLTQQLAQTEQHLNHLMTQLD). Residues 186 to 210 (KEDQEAGNSQAWEEPITWSPETRNL) form a disordered region.

It is found in the membrane. The chain is Coiled-coil domain-containing protein 107 (Ccdc107) from Mus musculus (Mouse).